Reading from the N-terminus, the 461-residue chain is Bifunctional protein HldE (461 aa).

The interval 1–312 (MLEFLSQQKP…IKSFNRVDFE (312 aa)) is ribokinase. Residue 191-194 (NKKE) participates in ATP binding. The active site involves Asp259. A cytidylyltransferase region spans residues 334–461 (FTNGCFDIVH…KIIEKIKDKK (128 aa)).

The protein in the N-terminal section; belongs to the carbohydrate kinase PfkB family. In the C-terminal section; belongs to the cytidylyltransferase family. As to quaternary structure, homodimer.

The catalysed reaction is D-glycero-beta-D-manno-heptose 7-phosphate + ATP = D-glycero-beta-D-manno-heptose 1,7-bisphosphate + ADP + H(+). It catalyses the reaction D-glycero-beta-D-manno-heptose 1-phosphate + ATP + H(+) = ADP-D-glycero-beta-D-manno-heptose + diphosphate. Its pathway is nucleotide-sugar biosynthesis; ADP-L-glycero-beta-D-manno-heptose biosynthesis; ADP-L-glycero-beta-D-manno-heptose from D-glycero-beta-D-manno-heptose 7-phosphate: step 1/4. It functions in the pathway nucleotide-sugar biosynthesis; ADP-L-glycero-beta-D-manno-heptose biosynthesis; ADP-L-glycero-beta-D-manno-heptose from D-glycero-beta-D-manno-heptose 7-phosphate: step 3/4. In terms of biological role, catalyzes the phosphorylation of D-glycero-D-manno-heptose 7-phosphate at the C-1 position to selectively form D-glycero-beta-D-manno-heptose-1,7-bisphosphate. Functionally, catalyzes the ADP transfer from ATP to D-glycero-beta-D-manno-heptose 1-phosphate, yielding ADP-D-glycero-beta-D-manno-heptose. The sequence is that of Bifunctional protein HldE from Campylobacter jejuni subsp. jejuni serotype O:6 (strain 81116 / NCTC 11828).